Here is a 142-residue protein sequence, read N- to C-terminus: MFQGASALTLDAKGRMSVPSRYREALQGQAEGRVTVTKHPDGCLLLFPRPEWEVFRAKIAALPMDAHWWRRIFLGNAMDVDLDSAGRILVSPELRMAAGLEKEVMLLGMGSHFELWDSQTYIAKEQAAMAQGMPDALKNFTF.

SpoVT-AbrB domains lie at 5 to 51 (ASAL…PRPE) and 77 to 120 (AMDV…DSQT).

Belongs to the MraZ family. In terms of assembly, forms oligomers.

The protein localises to the cytoplasm. It is found in the nucleoid. The sequence is that of Transcriptional regulator MraZ from Burkholderia ambifaria (strain MC40-6).